The primary structure comprises 1813 residues: U3 small nucleolar RNA-associated protein 10 (1813 aa).

HEAT repeat units lie at residues 245-283 (DVLI…KASL), 389-427 (SETI…LQFN), 428-464 (ESDT…DIMP), 584-621 (ADMQ…LASK), and 659-695 (IIHH…QDDS). Disordered regions lie at residues 686-705 (IRGP…STGV) and 887-912 (DLGS…SSMD). Residues 690-705 (RSQDDSDRTRSESTGV) are compositionally biased toward basic and acidic residues. HEAT repeat units lie at residues 1058–1095 (QTID…AFEH), 1189–1228 (KIAV…KAHG), 1265–1302 (LSLV…SSND), 1309–1347 (ARVL…KYGK), 1398–1437 (EALP…HVPW), 1678–1715 (LASI…LAVA), and 1769–1806 (ALLP…ILGE).

It belongs to the HEATR1/UTP10 family. As to quaternary structure, component of the ribosomal small subunit (SSU) processome.

The protein localises to the nucleus. It is found in the nucleolus. Functionally, involved in nucleolar processing of pre-18S ribosomal RNA. Involved in ribosome biosynthesis. The protein is U3 small nucleolar RNA-associated protein 10 of Coccidioides immitis (strain RS) (Valley fever fungus).